We begin with the raw amino-acid sequence, 480 residues long: Nuclear receptor subfamily 6 group A member 1 (480 aa).

Residues Met-1–Arg-32 are disordered. Residues Gln-57–Glu-132 constitute a DNA-binding region (nuclear receptor). Zn(2+)-binding residues include Cys-60, Cys-63, Cys-77, Cys-80, Cys-96, Cys-102, Cys-112, and Cys-115. NR C4-type zinc fingers lie at residues Cys-60 to Cys-80 and Cys-96 to Cys-120. Disordered stretches follow at residues Arg-131–Glu-150 and Phe-162–Ser-199. The segment covering Glu-165–His-177 has biased composition (basic and acidic residues). The segment at His-172–Leu-253 is sufficient for interaction with UIMC1. The span at Ser-187 to Ser-199 shows a compositional bias: low complexity. Positions Gln-249 to Glu-480 constitute an NR LBD domain.

It belongs to the nuclear hormone receptor family. NR6 subfamily. As to quaternary structure, homodimer. Interacts with UIMC1. In terms of tissue distribution, shows highest expression in the germ cells of the adult testis.

It localises to the nucleus. Its function is as follows. Orphan nuclear receptor that binds to a response element containing the sequence 5'-TCAAGGTCA-3'. Acts as a regulator of embryonic stem cell pluripotency by mediating repression of POU5F1/OCT4: binds to the DR0 element within the POU5F1/OCT4 promoter and inhibits POU5F1/OCT4 expression during embryonic stem cell differentiation. Involved in the regulation of gene expression in germ cell development during gametogenesis. The polypeptide is Nuclear receptor subfamily 6 group A member 1 (NR6A1) (Homo sapiens (Human)).